Here is a 1977-residue protein sequence, read N- to C-terminus: Echinoderm microtubule-associated protein-like 5 (1977 aa).

WD repeat units lie at residues 59 to 100, 104 to 145, 148 to 187, 195 to 233, 235 to 273, 280 to 321, 323 to 362, 364 to 403, 406 to 445, 449 to 488, and 561 to 601; these read GHSD…TVSV, VHTH…MLSM, GHTDRIFDISWDLYQPNKLVSCGVKHIKFWSLCGNALTPK, GDLQTILCLACARDELTYSGALNGDIYVWKGINLIRTIQ, AHTAGIFSMNACEEGFATGGRDGCIRLWDLTFKPITVID, GYKG…LIMQ, HCEGELWALAVHPTKPLAVTGSDDRSVRIWSLVDHALIAR, NMDEPIRCAAVNADGVHLALGMKDGSLTVLRVRDMTEVVH, DRKEAIHELKYSPDGTYLAVGCNDSSVDIYGVAQRYKKVG, GSLSFITHLDWSSDSKYLQTNDGSGKRLLYKMPGGKEVTS, and GHSA…KLKD. Residues 609–629 are disordered; sequence ESLTESNSDESDSDLSDVPEL. Acidic residues predominate over residues 615–629; that stretch reads NSDESDSDLSDVPEL. 9 WD repeats span residues 725 to 766, 770 to 811, 814 to 853, 861 to 900, 901 to 940, 996 to 1035, 1038 to 1077, 1080 to 1120, and 1236 to 1276; these read GHDD…PLSI, YHQY…KLSV, GSKDKIFVVKMNPYVPDKLITAGIKHMKFWRRAGGGLIGR, GKNDTMMCAVYGWTEEMAFSGTSTGDVCIWRDVFLVKTVK, AHDGPVFSMHALEKGFVTGGKDGVVALWDDSFERCLKTYA, HMEGEVWGLATHPYLPICATVSDDKTLRIWDLSPSHCMLA, KLKKGGRCCCFSPDGKALAVGLNDGSFLMANADTLEDLVS, HRKD…RVGV, and AHST…HREK. 2 disordered regions span residues 1274-1299 and 1323-1363; these read REKKNCDSEESDTDSEEDGGYDSDVT and PHLQ…NVGK. The span at 1281–1294 shows a compositional bias: acidic residues; the sequence is SEESDTDSEEDGGY. Positions 1326–1337 are enriched in basic and acidic residues; it reads QQKEPSVDERQG. WD repeat units follow at residues 1420–1471, 1475–1516, 1519–1558, 1568–1606, 1608–1654, 1699–1739, 1741–1782, 1783–1822, 1895–1934, and 1940–1977; these read EHND…TLSI, SHSK…KIAS, GHNQRIFVAEFRPDSDTQFVSVGIKHVKFWTLAGRALLSK, ARMQTMLAVAFGANNLTFTGTISGDVCVWKDHILCRVVA, AHNG…RAFR, GHVD…MLNK, NLGH…GKKR, DRRCAIHDIRFSPDSRYLAVGSSENSVDFYDLTLGPTLNR, AEKADVTCACVSHSGISLVTGDDFGMVKLYDFPCPEKFAK, and GHSPHVTNIRFTSGDRHVVSAGGDDCSVFVWKCVHTPH.

Belongs to the WD repeat EMAP family. As to expression, highly expressed in brain, especially in hippocampus, cerebellum and olfactory bulb (at protein level).

The protein resides in the cytoplasm. The protein localises to the cytoskeleton. May modify the assembly dynamics of microtubules, such that microtubules are slightly longer, but more dynamic. In Rattus norvegicus (Rat), this protein is Echinoderm microtubule-associated protein-like 5 (Eml5).